The following is a 168-amino-acid chain: NADH dehydrogenase [ubiquinone] 1 alpha subcomplex assembly factor 2 (168 aa).

The segment at 112 to 168 (GKETSEELLPSPTATQVKGHASAPYFGREEPSVAPTSTGKTFQPGSWTPEDGKRQSQ) is disordered. At Ser133 the chain carries Phosphoserine. Positions 145 to 157 (APTSTGKTFQPGS) are enriched in polar residues.

Belongs to the complex I NDUFA12 subunit family. Interacts with ARMC9.

It localises to the mitochondrion. Functionally, acts as a molecular chaperone for mitochondrial complex I assembly. Complex I functions in the transfer of electrons from NADH to the respiratory chain. The immediate electron acceptor for the enzyme is believed to be ubiquinone. Is involved in the initial steps of cilia formation, including removal of CP110 from the mother centrioles, docking of membrane vesicles to the mother centrioles, and establishment of the transition zone. In Mus musculus (Mouse), this protein is NADH dehydrogenase [ubiquinone] 1 alpha subcomplex assembly factor 2 (Ndufaf2).